Consider the following 120-residue polypeptide: Large ribosomal subunit protein uL18 (120 aa).

Basic and acidic residues predominate over residues 1-10 (MKRTRTESVQ). Residues 1 to 24 (MKRTRTESVQRRHSRIRRKVEGTP) are disordered.

This sequence belongs to the universal ribosomal protein uL18 family. As to quaternary structure, part of the 50S ribosomal subunit; part of the 5S rRNA/L5/L18/L25 subcomplex. Contacts the 5S and 23S rRNAs.

This is one of the proteins that bind and probably mediate the attachment of the 5S RNA into the large ribosomal subunit, where it forms part of the central protuberance. This chain is Large ribosomal subunit protein uL18, found in Gloeothece citriformis (strain PCC 7424) (Cyanothece sp. (strain PCC 7424)).